A 151-amino-acid polypeptide reads, in one-letter code: Large ribosomal subunit protein bL9 (151 aa).

The protein belongs to the bacterial ribosomal protein bL9 family.

Functionally, binds to the 23S rRNA. The protein is Large ribosomal subunit protein bL9 of Pseudothermotoga lettingae (strain ATCC BAA-301 / DSM 14385 / NBRC 107922 / TMO) (Thermotoga lettingae).